We begin with the raw amino-acid sequence, 571 residues long: Kelch-like protein 28 (571 aa).

Residues 35 to 102 (CDIILRVGDV…AYTGTVFISQ (68 aa)) enclose the BTB domain. Kelch repeat units lie at residues 284-331 (VLCA…VLDQ), 332-386 (KVFV…VLAG), 387-433 (EVFA…VLDG), 435-479 (LYAI…VMLG), 480-526 (FIFV…VIDN), and 528-570 (LYVV…GLTA).

The protein is Kelch-like protein 28 (Klhl28) of Mus musculus (Mouse).